Consider the following 429-residue polypeptide: Histidine--tRNA ligase (429 aa).

Belongs to the class-II aminoacyl-tRNA synthetase family. Homodimer.

The protein localises to the cytoplasm. The catalysed reaction is tRNA(His) + L-histidine + ATP = L-histidyl-tRNA(His) + AMP + diphosphate + H(+). This chain is Histidine--tRNA ligase, found in Escherichia fergusonii (strain ATCC 35469 / DSM 13698 / CCUG 18766 / IAM 14443 / JCM 21226 / LMG 7866 / NBRC 102419 / NCTC 12128 / CDC 0568-73).